A 299-amino-acid polypeptide reads, in one-letter code: Putative KilA-N domain-containing protein R879 (299 aa).

The 75-residue stretch at 1 to 75 (MKSDNGILMS…IKVSEIVLSY (75 aa)) folds into the KilA-N domain. A coiled-coil region spans residues 76 to 150 (HAKEAIKEKE…DKKINELLSK (75 aa)).

This is Putative KilA-N domain-containing protein R879 from Acanthamoeba polyphaga mimivirus (APMV).